Here is a 385-residue protein sequence, read N- to C-terminus: Homoserine O-succinyltransferase (385 aa).

Positions 45–355 constitute an AB hydrolase-1 domain; sequence NAVLVCHALN…SHGHDAFLLD (311 aa). Serine 151 (nucleophile) is an active-site residue. Arginine 221 is a binding site for substrate. Catalysis depends on residues aspartate 316 and histidine 349. Aspartate 350 lines the substrate pocket.

It belongs to the AB hydrolase superfamily. MetX family. In terms of assembly, homodimer.

It localises to the cytoplasm. The enzyme catalyses L-homoserine + succinyl-CoA = O-succinyl-L-homoserine + CoA. It participates in amino-acid biosynthesis; L-methionine biosynthesis via de novo pathway; O-succinyl-L-homoserine from L-homoserine: step 1/1. Functionally, transfers a succinyl group from succinyl-CoA to L-homoserine, forming succinyl-L-homoserine. In Herminiimonas arsenicoxydans, this protein is Homoserine O-succinyltransferase.